The sequence spans 260 residues: Triosephosphate isomerase (260 aa).

11-13 (NWK) provides a ligand contact to substrate. H103 serves as the catalytic Electrophile. E175 (proton acceptor) is an active-site residue. Residues G181, S220, and 241-242 (GG) each bind substrate.

This sequence belongs to the triosephosphate isomerase family. As to quaternary structure, homodimer.

It is found in the cytoplasm. The catalysed reaction is D-glyceraldehyde 3-phosphate = dihydroxyacetone phosphate. It functions in the pathway carbohydrate biosynthesis; gluconeogenesis. It participates in carbohydrate degradation; glycolysis; D-glyceraldehyde 3-phosphate from glycerone phosphate: step 1/1. In terms of biological role, involved in the gluconeogenesis. Catalyzes stereospecifically the conversion of dihydroxyacetone phosphate (DHAP) to D-glyceraldehyde-3-phosphate (G3P). The protein is Triosephosphate isomerase of Shewanella denitrificans (strain OS217 / ATCC BAA-1090 / DSM 15013).